The following is a 602-amino-acid chain: Aspartate--tRNA(Asp/Asn) ligase (602 aa).

E191 serves as a coordination point for L-aspartate. Residues 215-218 (QLYK) are aspartate. R237 lines the L-aspartate pocket. Residues 237 to 239 (RDE) and Q246 contribute to the ATP site. H465 contributes to the L-aspartate binding site. Residue E499 coordinates ATP. R506 contacts L-aspartate. 551 to 554 (GLDR) is a binding site for ATP.

It belongs to the class-II aminoacyl-tRNA synthetase family. Type 1 subfamily. In terms of assembly, homodimer.

It is found in the cytoplasm. The catalysed reaction is tRNA(Asx) + L-aspartate + ATP = L-aspartyl-tRNA(Asx) + AMP + diphosphate. In terms of biological role, aspartyl-tRNA synthetase with relaxed tRNA specificity since it is able to aspartylate not only its cognate tRNA(Asp) but also tRNA(Asn). Reaction proceeds in two steps: L-aspartate is first activated by ATP to form Asp-AMP and then transferred to the acceptor end of tRNA(Asp/Asn). The sequence is that of Aspartate--tRNA(Asp/Asn) ligase from Treponema pallidum (strain Nichols).